The primary structure comprises 736 residues: Na(+)/H(+) antiporter NhaA (736 aa).

The segment at 1 to 387 (MNHSPQSARP…ICGYLLLRAA (387 aa)) is na(+)/H(+) antiporter NhaA. A run of 11 helical transmembrane segments spans residues 23 to 43 (AGGI…NSPF), 58 to 78 (LSLA…LVGL), 96 to 116 (MLPG…FAVL), 126 to 146 (GWAV…SLLG), 155 to 175 (VFLA…IAIF), 178 to 198 (AEIS…LFVM), 201 to 221 (MDVV…FFVF), 265 to 285 (VAFI…FKGL), 298 to 318 (ILLG…WLAI), 334 to 354 (LYGV…IGLL), and 367 to 387 (IGVL…LRAA). Residues 388-736 (RPDQSAANPL…EKAIWARYGL (349 aa)) are peptidase S49.

In the N-terminal section; belongs to the NhaA Na(+)/H(+) (TC 2.A.33) antiporter family. It in the C-terminal section; belongs to the peptidase S49 family.

Its subcellular location is the cell inner membrane. It catalyses the reaction Na(+)(in) + 2 H(+)(out) = Na(+)(out) + 2 H(+)(in). Its function is as follows. Na(+)/H(+) antiporter that extrudes sodium in exchange for external protons. This is Na(+)/H(+) antiporter NhaA from Brucella melitensis biotype 1 (strain ATCC 23456 / CCUG 17765 / NCTC 10094 / 16M).